A 619-amino-acid polypeptide reads, in one-letter code: Kinesin light chain 4 (619 aa).

An N-acetylserine modification is found at serine 2. A coiled-coil region spans residues 32–150 (GLESLHSEHQ…EEEKKHLEFL (119 aa)). One copy of the TPR 1 repeat lies at 55–88 (QQGGHEEGLVHEKARQLRRSMENIELGLSEAQVM). Positions 156-175 (YDEDGHSMEEKEGDASKDSL) are enriched in basic and acidic residues. The segment at 156-200 (YDEDGHSMEEKEGDASKDSLDDLFPNEEEEDSSNDLSRGQGAAAA) is disordered. Serine 174 bears the Phosphoserine mark. Acidic residues predominate over residues 179–188 (FPNEEEEDSS). 5 TPR repeats span residues 211–244 (LRTLHNLVIQYAAQGRYEVAVPLCKQALEDLERT), 253–286 (ATMLNILALVYRDQNKYKEAAHLLNDALSIREST), 295–328 (AATLNNLAVLYGKRGKYKEAEPLCQRALEIREKV), 337–370 (AKQLNNLALLCQNQGKYEAVERYYQRALAIYERQ), and 379–412 (ARTKNNLASCYLKQGKYSEAETLYKEILTRAHVQ). At serine 460 the chain carries Phosphoserine. One copy of the TPR 7 repeat lies at 464–497 (NTTLRNLGALYRRQGKLEAAETLEECALRSRKQG). Phosphoserine occurs at positions 565, 566, and 590. Residues 571–619 (RKLQGTEPRPSSSNMKRAASLNYLNQPNAAPLQTSRGLSASTVDLSSSS) form a disordered region. The span at 592-608 (NYLNQPNAAPLQTSRGL) shows a compositional bias: polar residues. The segment covering 609-619 (SASTVDLSSSS) has biased composition (low complexity). Residue threonine 612 is modified to Phosphothreonine.

Belongs to the kinesin light chain family. As to quaternary structure, oligomeric complex composed of two heavy chains and two light chains.

Its subcellular location is the cytoplasm. It localises to the cytoskeleton. Its function is as follows. Kinesin is a microtubule-associated force-producing protein that may play a role in organelle transport. The light chain may function in coupling of cargo to the heavy chain or in the modulation of its ATPase activity. The chain is Kinesin light chain 4 (Klc4) from Rattus norvegicus (Rat).